The chain runs to 470 residues: ADAM DEC1 (470 aa).

An N-terminal signal peptide occupies residues 1-30 (MLRGISQLPAVATMSWVLLPVLWLIVQTQA). A propeptide spanning residues 31-205 (IAIKQTPELT…QGPIRISRSL (175 aa)) is cleaved from the precursor. N-linked (GlcNAc...) asparagine glycosylation occurs at Asn-61. The interval 173–200 (FTSNQEEQDPANHTCGVKSTDGKQGPIR) is disordered. Asn-184 carries N-linked (GlcNAc...) (complex) asparagine glycosylation. One can recognise a Peptidase M12B domain in the interval 218-412 (KYIDLYLVLD…QKPKCLLQAP (195 aa)). Asn-237 carries N-linked (GlcNAc...) asparagine glycosylation. Disulfide bonds link Cys-328–Cys-407 and Cys-369–Cys-374. His-352 contacts Zn(2+). Residue Glu-353 is part of the active site. Residues His-356 and Asp-362 each coordinate Zn(2+). Positions 420 to 470 (TPVCGNHLLEVGEDCDCGSPKECTNLCCEALTCKLKPGTDCGGDAPNHTTE) constitute a Disintegrin domain. An N-linked (GlcNAc...) asparagine glycan is attached at Asn-466.

Requires Zn(2+) as cofactor. In terms of tissue distribution, expressed highly in the small intestine and appendix, moderately in lymph node, mucosal lining of the colon, thymus, spleen and very weakly in the bone marrow. Predominantly expressed in dendritic cells (DC) of the germinal center. Weakly expressed in monocyte and highly expressed in macrophage. Absent in immature DC.

The protein localises to the secreted. May play an important role in the control of the immune response and during pregnancy. The chain is ADAM DEC1 (ADAMDEC1) from Homo sapiens (Human).